Consider the following 425-residue polypeptide: UDP-N-acetylglucosamine 1-carboxyvinyltransferase (425 aa).

22-23 (KN) contributes to the phosphoenolpyruvate binding site. Arginine 98 is a binding site for UDP-N-acetyl-alpha-D-glucosamine. Cysteine 122 acts as the Proton donor in catalysis. At cysteine 122 the chain carries 2-(S-cysteinyl)pyruvic acid O-phosphothioketal. UDP-N-acetyl-alpha-D-glucosamine-binding positions include 127–131 (RPVDQ), aspartate 313, and isoleucine 335.

The protein belongs to the EPSP synthase family. MurA subfamily.

It localises to the cytoplasm. The catalysed reaction is phosphoenolpyruvate + UDP-N-acetyl-alpha-D-glucosamine = UDP-N-acetyl-3-O-(1-carboxyvinyl)-alpha-D-glucosamine + phosphate. It participates in cell wall biogenesis; peptidoglycan biosynthesis. In terms of biological role, cell wall formation. Adds enolpyruvyl to UDP-N-acetylglucosamine. The sequence is that of UDP-N-acetylglucosamine 1-carboxyvinyltransferase from Xylella fastidiosa (strain 9a5c).